The following is a 423-amino-acid chain: Mannose-6-phosphate isomerase (423 aa).

Position 2 is an N-acetylalanine (alanine 2). Phosphoserine occurs at positions 102 and 108. Zn(2+) contacts are provided by glutamine 110, histidine 112, glutamate 137, and histidine 276. Residue arginine 295 is part of the active site.

It belongs to the mannose-6-phosphate isomerase type 1 family. It depends on Zn(2+) as a cofactor. As to expression, expressed in all tissues, but more abundant in heart, brain and skeletal muscle.

It is found in the cytoplasm. It carries out the reaction D-mannose 6-phosphate = D-fructose 6-phosphate. It functions in the pathway nucleotide-sugar biosynthesis; GDP-alpha-D-mannose biosynthesis; alpha-D-mannose 1-phosphate from D-fructose 6-phosphate: step 1/2. Isomerase that catalyzes the interconversion of fructose-6-P and mannose-6-P and has a critical role in the supply of D-mannose derivatives required for many eukaryotic glycosylation reactions. The protein is Mannose-6-phosphate isomerase of Homo sapiens (Human).